The chain runs to 378 residues: Acid phosphatase-like protein XcAP-2 (378 aa).

The signal sequence occupies residues 1-19; sequence MKTTILLLVVLTIVQLSKA. 3 disulfide bridges follow: Cys147–Cys374, Cys168–Cys220, and Cys347–Cys351.

This sequence belongs to the histidine acid phosphatase family.

The protein resides in the secreted. Functionally, probably modulates blood feeding of fleas on vertebrate species by binding and sequestering different mediators involved in the host response. Binds histamine. Binds leukotriene B4, leukotriene C4, leukotriene D4 and leukotriene E4. Does not bind serotonin, adrenaline, noradrenaline, ADP, and stable analogs of thromboxane A2: U-46619 and cTXA2. In Xenopsylla cheopis (Oriental rat flea), this protein is Acid phosphatase-like protein XcAP-2.